Here is a 532-residue protein sequence, read N- to C-terminus: Probable inorganic phosphate transporter 1-9 (532 aa).

The Cytoplasmic portion of the chain corresponds to 1–22; that stretch reads MPELSLLSALDAARIQWYHFKA. Residues 23–43 traverse the membrane as a helical segment; that stretch reads IIVAGMGLFTDAYDLFCIAPI. The Extracellular segment spans residues 44-62; the sequence is MKMISQIYYHKDSIGTALL. A helical membrane pass occupies residues 63–83; the sequence is STSYAIALLGTALGQLIFGYL. At 84 to 91 the chain is on the cytoplasmic side; that stretch reads GDRVGRRK. Residues 92–112 traverse the membrane as a helical segment; it reads VYGLSLLIMVFSSFGCGFSVC. Over 113 to 124 the chain is Extracellular; sequence TTRRSCVMVSLG. A helical membrane pass occupies residues 125-145; that stretch reads FFRFVLGLGIGGDYPLSATIM. The Cytoplasmic segment spans residues 146-154; that stretch reads SEFANKRTR. A helical transmembrane segment spans residues 155 to 175; that stretch reads GAFIAAVFSMQGLGILMSSAV. The Extracellular segment spans residues 176-207; that stretch reads TMVVCLAFKNAGEGSSEKTNVAGLETLAPPES. The helical transmembrane segment at 208–228 threads the bilayer; it reads DIAWRLILMIGALPAALTFYW. The Cytoplasmic portion of the chain corresponds to 229–292; that stretch reads RMLMPETARY…KLFSRRFLSL (64 aa). A helical membrane pass occupies residues 293–313; sequence HGRDLFAASANWFLVDVVFYT. At 314 to 343 the chain is on the extracellular side; the sequence is SNLLLSQIFNFSNKPLNSTNVYDSAFEVAK. Residues 344–364 form a helical membrane-spanning segment; the sequence is LAAIVAACSTIPGYWFTVYFI. Over 365–371 the chain is Cytoplasmic; it reads DKIGRVK. Residues 372–392 form a helical membrane-spanning segment; the sequence is IQMMGFFLMAVVYLVAGIPYS. Topologically, residues 393 to 406 are extracellular; that stretch reads WYWSKHEKTNKGFM. A helical transmembrane segment spans residues 407–427; sequence VLYGLIFFFSNFGPNTTTFII. The Cytoplasmic portion of the chain corresponds to 428-441; the sequence is PAELFPARFRSTCH. A helical transmembrane segment spans residues 442–462; the sequence is GISGAAGKFGAIVGTVGFLWA. Over 463 to 478 the chain is Extracellular; sequence TRHHEEDGFPDVKRVR. The helical transmembrane segment at 479 to 499 threads the bilayer; that stretch reads IAFLILGGVCIAGMIVTYLFT. Over 500 to 532 the chain is Cytoplasmic; that stretch reads RETMGRSLEENEDEIVSTSAGSSPANELLRRQY. Positions 509–532 are disordered; that stretch reads ENEDEIVSTSAGSSPANELLRRQY. Polar residues predominate over residues 515–524; sequence VSTSAGSSPA.

This sequence belongs to the major facilitator superfamily. Phosphate:H(+) symporter (TC 2.A.1.9) family.

It localises to the membrane. Its function is as follows. High-affinity transporter for external inorganic phosphate. The protein is Probable inorganic phosphate transporter 1-9 (PHT1-9) of Arabidopsis thaliana (Mouse-ear cress).